The primary structure comprises 122 residues: Large ribosomal subunit protein uL14 (122 aa).

This sequence belongs to the universal ribosomal protein uL14 family. Part of the 50S ribosomal subunit. Forms a cluster with proteins L3 and L19. In the 70S ribosome, L14 and L19 interact and together make contacts with the 16S rRNA in bridges B5 and B8.

In terms of biological role, binds to 23S rRNA. Forms part of two intersubunit bridges in the 70S ribosome. In Neisseria meningitidis serogroup C (strain 053442), this protein is Large ribosomal subunit protein uL14.